The chain runs to 116 residues: U11-theraphotoxin-Hhn1b (116 aa).

Residues 1-21 (MNTVRVTFLLVFVLAVSLGQA) form the signal peptide. A propeptide spanning residues 22 to 74 (DKDENRMEMQEKTEQGKSYLDFAENLLLQKLEELEAKLLEEDSEESRNSRQKR) is cleaved from the precursor. A compositionally biased stretch (basic and acidic residues) spans 60–69 (LEEDSEESRN). Residues 60–83 (LEEDSEESRNSRQKRCIGEGVPCD) form a disordered region. Intrachain disulfides connect Cys-75-Cys-90, Cys-82-Cys-95, and Cys-89-Cys-110.

It belongs to the neurotoxin 14 (magi-1) family. 01 (HNTX-16) subfamily. Expressed by the venom gland.

Its subcellular location is the secreted. Probable ion channel inhibitor. This Cyriopagopus hainanus (Chinese bird spider) protein is U11-theraphotoxin-Hhn1b.